The following is a 248-amino-acid chain: Peptidyl-prolyl cis-trans isomerase, chloroplastic (248 aa).

The 159-residue stretch at 85–243 folds into the PPIase cyclophilin-type domain; that stretch reads FFDIEIGGES…KPCKIAKSGE (159 aa). Residues 223–248 are disordered; sequence QETSKLDNSPKKPCKIAKSGELPLDG.

The protein belongs to the cyclophilin-type PPIase family. As to expression, highly expressed in leaf.

It is found in the plastid. The protein resides in the chloroplast stroma. The catalysed reaction is [protein]-peptidylproline (omega=180) = [protein]-peptidylproline (omega=0). Its activity is regulated as follows. Binds cyclosporin A (CsA). CsA mediates some of its effects via an inhibitory action on PPIase. In terms of biological role, PPIases accelerate the folding of proteins. It catalyzes the cis-trans isomerization of proline imidic peptide bonds in oligopeptides. In Vicia faba (Broad bean), this protein is Peptidyl-prolyl cis-trans isomerase, chloroplastic.